The sequence spans 165 residues: Inorganic pyrophosphatase (165 aa).

Substrate-binding residues include lysine 21, arginine 35, and tyrosine 47. Aspartate 57, aspartate 62, and aspartate 94 together coordinate Mg(2+). Residue tyrosine 131 participates in substrate binding.

The protein belongs to the PPase family. Homotrimer. In presence of divalent cations the trimers aggregate to form a hexamer. The cofactor is Mg(2+).

The protein localises to the cytoplasm. The enzyme catalyses diphosphate + H2O = 2 phosphate + H(+). Functionally, catalyzes the hydrolysis of inorganic pyrophosphate (PPi) forming two phosphate ions. The protein is Inorganic pyrophosphatase of Bacillus sp. (strain PS3).